Here is a 461-residue protein sequence, read N- to C-terminus: Photosystem II CP43 reaction center protein (461 aa).

A propeptide spanning residues 1-2 (ME) is cleaved from the precursor. Thr-3 is modified (N-acetylthreonine). Thr-3 is subject to Phosphothreonine. 5 consecutive transmembrane segments (helical) span residues 57 to 81 (LFEV…PHLA), 122 to 143 (LLGP…KDRN), 166 to 188 (KALY…RKIT), 243 to 263 (KPFA…LSYS), and 279 to 300 (WFNN…ASQA). Glu-355 serves as a coordination point for [CaMn4O5] cluster. The helical transmembrane segment at 435 to 459 (RARAAAAGFEKGIDRDFEPVLSMTP) threads the bilayer.

It belongs to the PsbB/PsbC family. PsbC subfamily. PSII is composed of 1 copy each of membrane proteins PsbA, PsbB, PsbC, PsbD, PsbE, PsbF, PsbH, PsbI, PsbJ, PsbK, PsbL, PsbM, PsbT, PsbX, PsbY, PsbZ, Psb30/Ycf12, at least 3 peripheral proteins of the oxygen-evolving complex and a large number of cofactors. It forms dimeric complexes. The cofactor is Binds multiple chlorophylls and provides some of the ligands for the Ca-4Mn-5O cluster of the oxygen-evolving complex. It may also provide a ligand for a Cl- that is required for oxygen evolution. PSII binds additional chlorophylls, carotenoids and specific lipids..

It is found in the plastid. Its subcellular location is the chloroplast thylakoid membrane. In terms of biological role, one of the components of the core complex of photosystem II (PSII). It binds chlorophyll and helps catalyze the primary light-induced photochemical processes of PSII. PSII is a light-driven water:plastoquinone oxidoreductase, using light energy to abstract electrons from H(2)O, generating O(2) and a proton gradient subsequently used for ATP formation. The polypeptide is Photosystem II CP43 reaction center protein (Nicotiana sylvestris (Wood tobacco)).